Here is a 619-residue protein sequence, read N- to C-terminus: Replication restart protein PriA (619 aa).

The 167-residue stretch at Leu-119–Gly-285 folds into the Helicase ATP-binding domain. Gly-132–Thr-139 lines the ATP pocket. The DEAH box signature appears at Asp-228–His-231. Zn(2+)-binding residues include Cys-336, Cys-339, Cys-345, Cys-348, Cys-363, Cys-366, Cys-376, and Cys-379. The Helicase C-terminal domain maps to Pro-371–Cys-532.

The protein belongs to the helicase family. PriA subfamily. As to quaternary structure, component of the replication restart primosome. Zn(2+) is required as a cofactor.

It carries out the reaction Couples ATP hydrolysis with the unwinding of duplex DNA by translocating in the 3'-5' direction.. The catalysed reaction is ATP + H2O = ADP + phosphate + H(+). In terms of biological role, initiates the restart of stalled replication forks, which reloads the replicative helicase on sites other than the origin of replication. Recognizes and binds to abandoned replication forks and remodels them to uncover a helicase loading site. Promotes assembly of the primosome at these replication forks. The sequence is that of Replication restart protein PriA from Helicobacter pylori (strain J99 / ATCC 700824) (Campylobacter pylori J99).